We begin with the raw amino-acid sequence, 371 residues long: Glycosyltransferase 8 domain-containing protein 1 (371 aa).

The Cytoplasmic segment spans residues 1–7 (MSFRKVH). Residues 8 to 28 (IAIILLAAVVFLLILHHNILG) form a helical; Signal-anchor for type II membrane protein membrane-spanning segment. The Lumenal portion of the chain corresponds to 29 to 371 (LTDILTRQSS…RRHGEADGTK (343 aa)). Residues N104, N249, and N257 are each glycosylated (N-linked (GlcNAc...) asparagine).

It belongs to the glycosyltransferase 8 family.

It localises to the membrane. The chain is Glycosyltransferase 8 domain-containing protein 1 (glt8d1) from Xenopus tropicalis (Western clawed frog).